The sequence spans 367 residues: UDP-N-acetylglucosamine--N-acetylmuramyl-(pentapeptide) pyrophosphoryl-undecaprenol N-acetylglucosamine transferase (367 aa).

UDP-N-acetyl-alpha-D-glucosamine is bound by residues 10-12, asparagine 124, serine 196, and glutamine 300; that span reads TGG.

The protein belongs to the glycosyltransferase 28 family. MurG subfamily.

Its subcellular location is the cell membrane. It carries out the reaction di-trans,octa-cis-undecaprenyl diphospho-N-acetyl-alpha-D-muramoyl-L-alanyl-D-glutamyl-meso-2,6-diaminopimeloyl-D-alanyl-D-alanine + UDP-N-acetyl-alpha-D-glucosamine = di-trans,octa-cis-undecaprenyl diphospho-[N-acetyl-alpha-D-glucosaminyl-(1-&gt;4)]-N-acetyl-alpha-D-muramoyl-L-alanyl-D-glutamyl-meso-2,6-diaminopimeloyl-D-alanyl-D-alanine + UDP + H(+). Its pathway is cell wall biogenesis; peptidoglycan biosynthesis. In terms of biological role, cell wall formation. Catalyzes the transfer of a GlcNAc subunit on undecaprenyl-pyrophosphoryl-MurNAc-pentapeptide (lipid intermediate I) to form undecaprenyl-pyrophosphoryl-MurNAc-(pentapeptide)GlcNAc (lipid intermediate II). The polypeptide is UDP-N-acetylglucosamine--N-acetylmuramyl-(pentapeptide) pyrophosphoryl-undecaprenol N-acetylglucosamine transferase (Natranaerobius thermophilus (strain ATCC BAA-1301 / DSM 18059 / JW/NM-WN-LF)).